Here is a 174-residue protein sequence, read N- to C-terminus: Photosystem I assembly protein Ycf4 (174 aa).

2 helical membrane-spanning segments follow: residues 11-31 and 56-76; these read LSNI…FLNG and IILM…CLTI.

This sequence belongs to the Ycf4 family.

It localises to the plastid. The protein resides in the chloroplast thylakoid membrane. In terms of biological role, seems to be required for the assembly of the photosystem I complex. This Emiliania huxleyi (Coccolithophore) protein is Photosystem I assembly protein Ycf4.